A 409-amino-acid chain; its full sequence is Na(+)/H(+) antiporter NhaA 2 (409 aa).

A run of 12 helical transmembrane segments spans residues 10-30 (VAAG…NTPA), 60-80 (GLLV…FLAG), 89-109 (LVPA…YLAI), 118-138 (GWPV…AVFG), 148-168 (FLLA…AVFF), 171-191 (GLDL…AVVG), 203-223 (IAVV…TLSS), 224-244 (GIHA…LSGL), 257-277 (IVLP…IGLA), 283-303 (FWGI…AGGL), 328-348 (LLGG…FAGL), and 356-376 (TLAV…TLSI). Residues 384–409 (AGAAADDDDATRDDFPAHADGGPARA) are disordered.

It belongs to the NhaA Na(+)/H(+) (TC 2.A.33) antiporter family.

It is found in the cell membrane. The catalysed reaction is Na(+)(in) + 2 H(+)(out) = Na(+)(out) + 2 H(+)(in). Its function is as follows. Na(+)/H(+) antiporter that extrudes sodium in exchange for external protons. This chain is Na(+)/H(+) antiporter NhaA 2, found in Clavibacter michiganensis subsp. michiganensis (strain NCPPB 382).